Here is a 186-residue protein sequence, read N- to C-terminus: CASP-like protein ARALYDRAFT_316979 (186 aa).

The Cytoplasmic portion of the chain corresponds to 1-23; sequence MRRNGDGEEVVAKRRRRIKELVQ. Residues 24 to 44 form a helical membrane-spanning segment; that stretch reads VALRGGCLAASATAMAVMLTA. The Extracellular portion of the chain corresponds to 45 to 70; that stretch reads TEEGVADIYGFKLTLSSNWSFSPSYQ. The N-linked (GlcNAc...) asparagine glycan is linked to Asn-62. Residues 71-91 traverse the membrane as a helical segment; the sequence is YVVGACTGTVLYSLFQLCLGV. Residues 92–115 are Cytoplasmic-facing; that stretch reads YRLLTGSPITPSRFQAWLCFTSDQ. The helical transmembrane segment at 116–132 threads the bilayer; it reads LFGYLMMSAGSAGSGVT. The Extracellular segment spans residues 133-161; the sequence is NLNKTGIRHTPLPDFCKTLSSFCNHVALS. Asn-135 carries N-linked (GlcNAc...) asparagine glycosylation. A helical membrane pass occupies residues 162–182; it reads LLLVFLSFIFLASSSFFTVLV. Topologically, residues 183 to 186 are cytoplasmic; sequence LSTP.

The protein belongs to the Casparian strip membrane proteins (CASP) family. As to quaternary structure, homodimer and heterodimers.

The protein localises to the cell membrane. The protein is CASP-like protein ARALYDRAFT_316979 of Arabidopsis lyrata subsp. lyrata (Lyre-leaved rock-cress).